Here is a 250-residue protein sequence, read N- to C-terminus: Envelope glycoprotein L (250 aa).

Residues 1 to 18 form the signal peptide; that stretch reads MELLLFVMSLILLTFSKA. Residues 31–239 form the gL betaherpesvirus-type domain; it reads KLDDCIAAVI…EAYNSKLPFR (209 aa). Cys136 and Cys141 are oxidised to a cystine.

It belongs to the herpesviridae glycoprotein L (gL) family. Betaherpesvirinae gL subfamily. Interacts with glycoprotein H (gH); this interaction is necessary for the correct processing and cell surface expression of gH. Part of a gH-gL-gO complex.

The protein resides in the virion membrane. The protein localises to the host cell membrane. Its subcellular location is the host Golgi apparatus. It is found in the host trans-Golgi network. Functionally, the heterodimer glycoprotein H-glycoprotein L is required for the fusion of viral and plasma membranes leading to virus entry into the host cell. Acts as a functional inhibitor of gH and maintains gH in an inhibited form. Upon binding to host integrins, gL dissociates from gH leading to activation of the viral fusion glycoproteins gB and gH. The sequence is that of Envelope glycoprotein L from Homo sapiens (Human).